The sequence spans 2000 residues: E3 ubiquitin-protein ligase TTC3 (2000 aa).

The segment at 20 to 249 is interaction with POLG; the sequence is MDDFAEGGLS…RHSCMQCVKQ (230 aa). TPR repeat units lie at residues 250-283 and 284-317; these read GELMKMRGNEEFAKEKFEIAVIYYTRAIEYRPEN and HLLYGNRALCFLRMGQFRNALSDGKRAIVLKNTW. Ser397 is subject to Phosphoserine. Positions 442 to 478 are disordered; that stretch reads CDCHPEFLPPPSQPPRHKGKQKSRNNESEKPSSNSQV. TPR repeat units follow at residues 556–592 and 596–629; these read VLVVYGLAVSLLGIGRPEELSEAENQFKRIIEHYPNE and CLAYCGIGKVYLKKNRFLEALNHFEKAKTLICRL. Residues 804 to 828 are disordered; sequence AQERMEEDLRESNPPKPEEPEETVE. A Phosphoserine modification is found at Ser1029. Disordered regions lie at residues 1041-1087, 1233-1308, 1423-1448, 1806-1839, and 1894-1947; these read NKGK…GPFA, FQPD…PEDA, QSSTADARTALSEPEGNSRHSGSSDS, LEVKKASQVSPSEQNPEADEKPSGQATRSSQSQK, and EEQK…VPAP. The segment covering 1059 to 1070 has biased composition (polar residues); sequence GTASVTPSSETV. Ser1080 is subject to Phosphoserine. Over residues 1268–1277 the composition is skewed to low complexity; it reads DSDSSSGSAS. A compositionally biased stretch (polar residues) spans 1829 to 1839; sequence GQATRSSQSQK. Basic and acidic residues predominate over residues 1894–1911; it reads EEQKKKKPNPGKDKKTSE. Positions 1912-1934 are enriched in low complexity; that stretch reads AHPAASVSKSSPSPPLAAAGPSA. The RING-type; atypical zinc finger occupies 1952–1991; that stretch reads CQICHEIFKSKNMRVLKCGHKFHKGCFKQWLKGQSTCPTC.

In terms of assembly, interacts (when phosphorylated on Ser-397) with AKT1, AKT2 and AKT3 (when phosphorylated). Interacts with CIT. Interacts with POLG. Interacts with HSP70. Interacts with SMURF2. Post-translationally, phosphorylation on Ser-397 by Akt is required for ubiquitin ligase activity. In terms of processing, proteolytically cleaved into differently sized N- and C-terminal fragments.

The protein localises to the nucleus. The protein resides in the cytoplasm. It localises to the golgi apparatus. It catalyses the reaction S-ubiquitinyl-[E2 ubiquitin-conjugating enzyme]-L-cysteine + [acceptor protein]-L-lysine = [E2 ubiquitin-conjugating enzyme]-L-cysteine + N(6)-ubiquitinyl-[acceptor protein]-L-lysine.. Its pathway is protein modification; protein ubiquitination. Its function is as follows. E3 ubiquitin-protein ligase which catalyzes the formation of 'Lys-48'-polyubiquitin chains. Mediates the ubiquitination and subsequent degradation of phosphorylated Akt (AKT1, AKT2 and AKT3) in the nucleus. Acts as a terminal regulator of Akt signaling after activation; its phosphorylation by Akt, which is a prerequisite for ubiquitin ligase activity, suggests the existence of a regulation mechanism required to control Akt levels after activation. Positively regulates TGFB1-induced epithelial-mesenchymal transition and myofibroblast differentiation by mediating the ubiquitination and subsequent degradation of SMURF2. Regulates neuronal differentiation by regulating actin remodeling and Golgi organization via a signaling cascade involving RHOA, CIT and ROCK. Inhibits cell proliferation. The sequence is that of E3 ubiquitin-protein ligase TTC3 from Rattus norvegicus (Rat).